The primary structure comprises 1108 residues: MDTVLNNINQSRYFNDSTANTKIEEIKKHLDSPSDADKLESMKKLIAMLSKGRDVSEAFPQVVKNVIVKNLEIKKLVYMYLVHYAESQNDSALLSINTIQKSLNDQSQVIRASALRVMSSIRVIDIIEVIILAIEKSVKDTSPFVRKAAAFAIAKVHKLDCDKQEPLIDLLEILLNDTSTMVLGAAIVAFNELCPQRFDLLHQHYRKICQLLADFDEWSQVIVLDILTKYARSQFRCPDSTMNDKNIKQFKKKSKSFYSDEEDQEDDEPENSLYKKKPLERDMFDSSEEIDMDHRLLLKSTLPLLQSRNNAVVMAVSSLYFYCAPSIEAQKVGKSLVRILRSGPEVQYITLTNISTMVTLRPSMFEPHLSEFFIHSSDPEYSIKLKLEILTRLATPENIGKILKEFKEYVKNEDKKFVAATIQAIGSCASTVPDVTESCIYGLMSLLSNQSTVVVAESVIVLKRLLQLNATNEKLEKLEKEKEKEKDVKENQSTISKHSSSNNSIKYDNIILHLSKLLDTLQVPSARASIVWVIGEYCYRVPLVAPDVFRKLVKSFSDEHESVKLETLNLGSKLYVQFTDNNSTTTTDNSIPNEFKNERTKEKITLMFQYVLNLAKFDQNYDIRDNSRMLKHFYFNTENTQSINSNIKQIVINQKPIPTETSISEDRQRFTLGSLSHIVNHTALGYTALPDFPDVAPDPSVREPIQRWIPNQQSQQQQHQQQQLNNIFVDTPFYSDEEEEDEEEYDEEEEEEEYEEQNEYEDFFGEEKKNKKKNRKQQNYDEDEYNQDIDDGEYDGEGEVQAEDEDDFDELFGITNDDNNQTANGIGGGGSGEEEMDKFDFENYINSTTKSVKKILLKPTISGGLSIDYCFIRIRDNEEFSCQPRYNIIQLNIKNQSDETFTDISIINKNLIDGADISEFDPIESIEPNQAIQKQIYVLFNSTSQSCKFEISFNKGNFPVTLTPIIGELLIPIVPIYESISQWKDEFEEVGEFKQVDDQFEFGDQCLDKLNNNNNNNNNNNNESGDENIGLMPILPIVLEGINLIPIASNKLKSKIQFASKTLLKDENIYVQIQLLKQQPPTVNCIIRSNDQVVSALLLKKLKDVLQK.

4 HEAT repeats span residues 90-127 (DSALLSINTIQKSLNDQSQVIRASALRVMSSIRVIDII), 327-363 (IEAQKVGKSLVRILRSGPEVQYITLTNISTMVTLRPS), 397-433 (ENIGKILKEFKEYVKNEDKKFVAATIQAIGSCASTVP), and 434-471 (DVTESCIYGLMSLLSNQSTVVVAESVIVLKRLLQLNAT). The span at 480 to 490 (KEKEKEKDVKE) shows a compositional bias: basic and acidic residues. Disordered regions lie at residues 480-501 (KEKEKEKDVKENQSTISKHSSS), 736-797 (DEEE…YDGE), and 811-835 (LFGITNDDNNQTANGIGGGGSGEEE). Composition is skewed to acidic residues over residues 736 to 764 (DEEEEDEEEYDEEEEEEEYEEQNEYEDFF) and 780 to 797 (YDEDEYNQDIDDGEYDGE).

Belongs to the adaptor complexes large subunit family. Adaptor protein complex 3 (AP-3) is a heterotetramer composed of two large adaptins (delta-type subunit and beta-type subunit), a medium adaptin (mu-type subunit) and a small adaptin (sigma-type subunit).

It is found in the endosome membrane. Its function is as follows. Part of the AP-3 complex, an adaptor-related complex which is essential for the compartmentalization of the endocytic pathway. The polypeptide is AP-3 complex subunit beta (ap3b-1) (Dictyostelium discoideum (Social amoeba)).